We begin with the raw amino-acid sequence, 306 residues long: 4-hydroxy-tetrahydrodipicolinate synthase (306 aa).

Threonine 49 lines the pyruvate pocket. The Proton donor/acceptor role is filled by tyrosine 136. Lysine 164 functions as the Schiff-base intermediate with substrate in the catalytic mechanism. Isoleucine 207 contacts pyruvate.

It belongs to the DapA family. In terms of assembly, homotetramer; dimer of dimers.

It localises to the cytoplasm. The catalysed reaction is L-aspartate 4-semialdehyde + pyruvate = (2S,4S)-4-hydroxy-2,3,4,5-tetrahydrodipicolinate + H2O + H(+). It participates in amino-acid biosynthesis; L-lysine biosynthesis via DAP pathway; (S)-tetrahydrodipicolinate from L-aspartate: step 3/4. In terms of biological role, catalyzes the condensation of (S)-aspartate-beta-semialdehyde [(S)-ASA] and pyruvate to 4-hydroxy-tetrahydrodipicolinate (HTPA). The protein is 4-hydroxy-tetrahydrodipicolinate synthase of Haloarcula marismortui (strain ATCC 43049 / DSM 3752 / JCM 8966 / VKM B-1809) (Halobacterium marismortui).